The following is a 630-amino-acid chain: DNA topoisomerase 4 subunit B (630 aa).

ATP-binding positions include Y5, N42, D69, 110 to 116, and K334; that span reads GLHGVGI. A Toprim domain is found at 412–525; sequence TELFLVEGDS…NGHVYVALPP (114 aa). Residues E418, D490, and D492 each contribute to the Mg(2+) site.

The protein belongs to the type II topoisomerase family. ParE type 1 subfamily. As to quaternary structure, heterotetramer composed of ParC and ParE. Mg(2+) serves as cofactor. The cofactor is Mn(2+). Ca(2+) is required as a cofactor.

The enzyme catalyses ATP-dependent breakage, passage and rejoining of double-stranded DNA.. Topoisomerase IV is essential for chromosome segregation. It relaxes supercoiled DNA. Performs the decatenation events required during the replication of a circular DNA molecule. The polypeptide is DNA topoisomerase 4 subunit B (Salmonella typhi).